A 135-amino-acid polypeptide reads, in one-letter code: Protein E6 (135 aa).

Zinc fingers lie at residues Cys11–Cys47 and Cys83–Cys119.

It belongs to the papillomaviridae E6 protein family. In terms of assembly, forms homodimers. Interacts with ubiquitin-protein ligase UBE3A/E6-AP; this interaction stimulates UBE3A ubiquitin activity. Interacts with host BAK1.

It localises to the host cytoplasm. It is found in the host nucleus. Its function is as follows. Plays a major role in the induction and maintenance of cellular transformation. E6 associates with host UBE3A/E6-AP ubiquitin-protein ligase and modulates its activity. Protects host keratinocytes from apoptosis by mediating the degradation of host BAK1. May also inhibit host immune response. The chain is Protein E6 from Cervus elaphus (Red deer).